The primary structure comprises 162 residues: D-aminoacyl-tRNA deacylase (162 aa).

The short motif at 145-146 (GP) is the Gly-cisPro motif, important for rejection of L-amino acids element.

It belongs to the DTD family. Homodimer.

It localises to the cytoplasm. The enzyme catalyses glycyl-tRNA(Ala) + H2O = tRNA(Ala) + glycine + H(+). It catalyses the reaction a D-aminoacyl-tRNA + H2O = a tRNA + a D-alpha-amino acid + H(+). Functionally, an aminoacyl-tRNA editing enzyme that deacylates mischarged D-aminoacyl-tRNAs. Also deacylates mischarged glycyl-tRNA(Ala), protecting cells against glycine mischarging by AlaRS. Acts via tRNA-based rather than protein-based catalysis; rejects L-amino acids rather than detecting D-amino acids in the active site. By recycling D-aminoacyl-tRNA to D-amino acids and free tRNA molecules, this enzyme counteracts the toxicity associated with the formation of D-aminoacyl-tRNA entities in vivo and helps enforce protein L-homochirality. In Bifidobacterium longum subsp. infantis (strain ATCC 15697 / DSM 20088 / JCM 1222 / NCTC 11817 / S12), this protein is D-aminoacyl-tRNA deacylase.